The primary structure comprises 563 residues: Sulfite reductase [NADPH] hemoprotein beta-component (563 aa).

4 residues coordinate [4Fe-4S] cluster: C426, C432, C472, and C476. C476 provides a ligand contact to siroheme.

This sequence belongs to the nitrite and sulfite reductase 4Fe-4S domain family. Alpha(8)-beta(8). The alpha component is a flavoprotein, the beta component is a hemoprotein. It depends on siroheme as a cofactor. [4Fe-4S] cluster serves as cofactor.

The enzyme catalyses hydrogen sulfide + 3 NADP(+) + 3 H2O = sulfite + 3 NADPH + 4 H(+). It functions in the pathway sulfur metabolism; hydrogen sulfide biosynthesis; hydrogen sulfide from sulfite (NADPH route): step 1/1. Its function is as follows. Component of the sulfite reductase complex that catalyzes the 6-electron reduction of sulfite to sulfide. This is one of several activities required for the biosynthesis of L-cysteine from sulfate. The chain is Sulfite reductase [NADPH] hemoprotein beta-component from Photobacterium profundum (strain SS9).